Reading from the N-terminus, the 172-residue chain is Adenine phosphoribosyltransferase (172 aa).

The protein belongs to the purine/pyrimidine phosphoribosyltransferase family. As to quaternary structure, homodimer.

The protein localises to the cytoplasm. The catalysed reaction is AMP + diphosphate = 5-phospho-alpha-D-ribose 1-diphosphate + adenine. It participates in purine metabolism; AMP biosynthesis via salvage pathway; AMP from adenine: step 1/1. Catalyzes a salvage reaction resulting in the formation of AMP, that is energically less costly than de novo synthesis. The polypeptide is Adenine phosphoribosyltransferase (Levilactobacillus brevis (strain ATCC 367 / BCRC 12310 / CIP 105137 / JCM 1170 / LMG 11437 / NCIMB 947 / NCTC 947) (Lactobacillus brevis)).